Consider the following 268-residue polypeptide: Shikimate dehydrogenase (NADP(+)) (268 aa).

Residues 13-15 and Thr-60 contribute to the shikimate site; that span reads SLS. Residue Lys-64 is the Proton acceptor of the active site. An NADP(+)-binding site is contributed by Glu-76. Residues Asn-85 and Asp-100 each coordinate shikimate. NADP(+) is bound by residues 124–128, 148–153, and Ile-209; these read GAGGA and NRTMAR. Tyr-211 is a shikimate binding site. Residue Gly-232 coordinates NADP(+).

The protein belongs to the shikimate dehydrogenase family. In terms of assembly, homodimer.

It carries out the reaction shikimate + NADP(+) = 3-dehydroshikimate + NADPH + H(+). It functions in the pathway metabolic intermediate biosynthesis; chorismate biosynthesis; chorismate from D-erythrose 4-phosphate and phosphoenolpyruvate: step 4/7. Functionally, involved in the biosynthesis of the chorismate, which leads to the biosynthesis of aromatic amino acids. Catalyzes the reversible NADPH linked reduction of 3-dehydroshikimate (DHSA) to yield shikimate (SA). The polypeptide is Shikimate dehydrogenase (NADP(+)) (Staphylococcus aureus (strain JH1)).